The primary structure comprises 747 residues: Probable alpha-galactosidase C (747 aa).

The signal sequence occupies residues Met1 to Ala24. N-linked (GlcNAc...) asparagine glycosylation is found at Asn36, Asn182, Asn190, Asn362, Asn429, and Asn449. Asp507 (nucleophile) is an active-site residue. An N-linked (GlcNAc...) asparagine glycan is attached at Asn534. Asp569 acts as the Proton donor in catalysis.

It belongs to the glycosyl hydrolase 36 family. As to quaternary structure, homotetramer. It depends on Mg(2+) as a cofactor. NAD(+) serves as cofactor.

Its subcellular location is the secreted. The catalysed reaction is Hydrolysis of terminal, non-reducing alpha-D-galactose residues in alpha-D-galactosides, including galactose oligosaccharides, galactomannans and galactolipids.. Hydrolyzes a variety of simple alpha-D-galactoside as well as more complex molecules such as oligosaccharides and polysaccharides. The chain is Probable alpha-galactosidase C (aglC) from Aspergillus terreus (strain NIH 2624 / FGSC A1156).